We begin with the raw amino-acid sequence, 365 residues long: Peptide chain release factor 2 (365 aa).

N5-methylglutamine is present on glutamine 252.

It belongs to the prokaryotic/mitochondrial release factor family. Methylated by PrmC. Methylation increases the termination efficiency of RF2.

The protein localises to the cytoplasm. In terms of biological role, peptide chain release factor 2 directs the termination of translation in response to the peptide chain termination codons UGA and UAA. This is Peptide chain release factor 2 from Aeromonas hydrophila subsp. hydrophila (strain ATCC 7966 / DSM 30187 / BCRC 13018 / CCUG 14551 / JCM 1027 / KCTC 2358 / NCIMB 9240 / NCTC 8049).